A 570-amino-acid chain; its full sequence is Periplasmic trehalase (570 aa).

Positions 1–34 (MIPPEIRRSVLLQKAIKLALAGTLLTFASFSATA) are cleaved as a signal peptide. Substrate is bound by residues Arg159, 166-167 (WD), Asn203, 212-214 (RSQ), 284-286 (RPE), and Gly317. Active-site proton donor/acceptor residues include Asp319 and Glu503. Residue Glu518 participates in substrate binding. The disordered stretch occupies residues 544-570 (KPCDSVPSTRPASLSATPTKTPSAATQ). Positions 554–570 (PASLSATPTKTPSAATQ) are enriched in low complexity.

Belongs to the glycosyl hydrolase 37 family. Monomer.

Its subcellular location is the periplasm. The enzyme catalyses alpha,alpha-trehalose + H2O = alpha-D-glucose + beta-D-glucose. Provides the cells with the ability to utilize trehalose at high osmolarity by splitting it into glucose molecules that can subsequently be taken up by the phosphotransferase-mediated uptake system. This chain is Periplasmic trehalase, found in Salmonella newport (strain SL254).